Here is a 283-residue protein sequence, read N- to C-terminus: Succinate dehydrogenase [ubiquinone] iron-sulfur subunit, mitochondrial (283 aa).

In terms of domain architecture, 2Fe-2S ferredoxin-type spans 66 to 145 (KKPTLQTYSI…PVKIYPLPHM (80 aa)). Cys105, Cys110, Cys113, and Cys125 together coordinate [2Fe-2S] cluster. The 4Fe-4S ferredoxin-type domain maps to 186 to 216 (DRKKLDGMYECILCACCSTSCPSYWWNQDEY). Residues Cys196, Cys199, and Cys202 each coordinate [4Fe-4S] cluster. Cys206 is a binding site for [3Fe-4S] cluster. Residue Trp211 coordinates a ubiquinone. 2 residues coordinate [3Fe-4S] cluster: Cys253 and Cys259. Cys263 lines the [4Fe-4S] cluster pocket.

The protein belongs to the succinate dehydrogenase/fumarate reductase iron-sulfur protein family. Component of complex II composed of four subunits: a flavoprotein (FP), an iron-sulfur protein (IP), and a cytochrome b composed of a large and a small subunit. [2Fe-2S] cluster is required as a cofactor. It depends on [3Fe-4S] cluster as a cofactor. Requires [4Fe-4S] cluster as cofactor.

The protein localises to the mitochondrion inner membrane. It carries out the reaction a quinone + succinate = fumarate + a quinol. It participates in carbohydrate metabolism; tricarboxylic acid cycle; fumarate from succinate (eukaryal route): step 1/1. Its function is as follows. Iron-sulfur protein (IP) subunit of succinate dehydrogenase (SDH) that is involved in complex II of the mitochondrial electron transport chain and is responsible for transferring electrons from succinate to ubiquinone (coenzyme Q). This chain is Succinate dehydrogenase [ubiquinone] iron-sulfur subunit, mitochondrial (SDH2), found in Uromyces fabae (Rust fungus).